We begin with the raw amino-acid sequence, 215 residues long: Kunitz trypsin inhibitor 2 (215 aa).

The N-terminal stretch at 1-23 (MKNPSVISFLIILLFAATICTHG) is a signal peptide. Cys67 and Cys114 form a disulfide bridge. The N-linked (GlcNAc...) asparagine glycan is linked to Asn145.

This sequence belongs to the protease inhibitor I3 (leguminous Kunitz-type inhibitor) family. Interacts with RD21A. Interacts with RD21B and RD21C. Expressed in vascular bundles of the carpels, the transmitting tract of the style and septum epidermis. Expressed in etiolated seedlings.

The protein localises to the secreted. It localises to the cell wall. Its subcellular location is the extracellular space. It is found in the apoplast. The protein resides in the endoplasmic reticulum. Water-soluble and chlorophyll-binding protein that probably does not function as a chloroplast chlorophyll carrier and is not involved in photosynthesis. Involved in the control of cell death in the transmitting tract and septum epidermis during flower development. Binds and inhibits the activity of the cysteine protease RD21A as a pro-death protein. May play a role in herbivore resistance activation during seedling greening. This is Kunitz trypsin inhibitor 2 from Arabidopsis thaliana (Mouse-ear cress).